Consider the following 1171-residue polypeptide: DNA polymerase catalytic subunit (1171 aa).

3 disordered regions span residues 647–687, 704–735, and 1149–1171; these read GTPA…PFRT, PGGG…EPAP, and VEEE…DSSR. The span at 649-662 shows a compositional bias: pro residues; sequence PARPPETPARPPET. Low complexity-rich tracts occupy residues 663-674 and 709-725; these read PAAGPSGAAHAG and VSSA…PSET. Over residues 1149–1158 the composition is skewed to basic and acidic residues; that stretch reads VEEEVCESER.

The protein belongs to the DNA polymerase type-B family.

The protein localises to the host nucleus. It catalyses the reaction DNA(n) + a 2'-deoxyribonucleoside 5'-triphosphate = DNA(n+1) + diphosphate. The chain is DNA polymerase catalytic subunit (DPOL) from Tupaia belangeri (Common tree shrew).